The sequence spans 104 residues: Interferon alpha-inducible protein 27-like protein 1 (104 aa).

Helical transmembrane passes span 14-34 (VAAVVGGVVAVGTVLVALSAM), 59-79 (GGGVAAGSLVAILQSVGAAGL), and 81-101 (VTSKVIGGFAGTALGAWLGSP).

It belongs to the IFI6/IFI27 family.

It is found in the membrane. Functionally, plays a role in the apoptotic process and has a pro-apoptotic activity. This chain is Interferon alpha-inducible protein 27-like protein 1, found in Homo sapiens (Human).